We begin with the raw amino-acid sequence, 388 residues long: Succinate--CoA ligase [ADP-forming] subunit beta (388 aa).

The ATP-grasp domain maps to 9 to 245 (KALLKEYGMP…KSQENERELK (237 aa)). ATP contacts are provided by residues Lys46, 53–55 (GRG), Glu100, Tyr103, and Glu108. Mg(2+) contacts are provided by Asn200 and Asp214. Substrate contacts are provided by residues Asn265 and 322–324 (GIV).

The protein belongs to the succinate/malate CoA ligase beta subunit family. As to quaternary structure, heterotetramer of two alpha and two beta subunits. It depends on Mg(2+) as a cofactor.

The enzyme catalyses succinate + ATP + CoA = succinyl-CoA + ADP + phosphate. It catalyses the reaction GTP + succinate + CoA = succinyl-CoA + GDP + phosphate. The protein operates within carbohydrate metabolism; tricarboxylic acid cycle; succinate from succinyl-CoA (ligase route): step 1/1. Succinyl-CoA synthetase functions in the citric acid cycle (TCA), coupling the hydrolysis of succinyl-CoA to the synthesis of either ATP or GTP and thus represents the only step of substrate-level phosphorylation in the TCA. The beta subunit provides nucleotide specificity of the enzyme and binds the substrate succinate, while the binding sites for coenzyme A and phosphate are found in the alpha subunit. The polypeptide is Succinate--CoA ligase [ADP-forming] subunit beta (Acinetobacter baumannii (strain SDF)).